Reading from the N-terminus, the 188-residue chain is Translocon-associated protein subunit beta (188 aa).

Residues 1–15 form the signal peptide; the sequence is MKFSLFALLFVVVSC. The Lumenal portion of the chain corresponds to 16–151; that stretch reads VDVGTQTRDA…EYDRRFAPKY (136 aa). 2 N-linked (GlcNAc...) asparagine glycosylation sites follow: asparagine 93 and asparagine 109. A helical transmembrane segment spans residues 152–172; the sequence is TYFLVFFLIVAPTTLGSFLLF. The Cytoplasmic segment spans residues 173–188; the sequence is QQSKARFPNVIKKKST.

Belongs to the TRAP-beta family. In terms of assembly, heterotetramer of TRAP-alpha, TRAP-beta, TRAP-delta and TRAP-gamma.

The protein localises to the endoplasmic reticulum membrane. In terms of biological role, TRAP proteins are part of a complex whose function is to bind calcium to the ER membrane and thereby regulate the retention of ER resident proteins. The chain is Translocon-associated protein subunit beta from Caenorhabditis elegans.